A 200-amino-acid polypeptide reads, in one-letter code: Probable nicotinate-nucleotide adenylyltransferase (200 aa).

The protein belongs to the NadD family.

It carries out the reaction nicotinate beta-D-ribonucleotide + ATP + H(+) = deamido-NAD(+) + diphosphate. It participates in cofactor biosynthesis; NAD(+) biosynthesis; deamido-NAD(+) from nicotinate D-ribonucleotide: step 1/1. Its function is as follows. Catalyzes the reversible adenylation of nicotinate mononucleotide (NaMN) to nicotinic acid adenine dinucleotide (NaAD). The chain is Probable nicotinate-nucleotide adenylyltransferase from Clavibacter michiganensis subsp. michiganensis (strain NCPPB 382).